A 101-amino-acid chain; its full sequence is Small ribosomal subunit protein bS16 (101 aa).

The protein belongs to the bacterial ribosomal protein bS16 family.

This Ureaplasma urealyticum serovar 10 (strain ATCC 33699 / Western) protein is Small ribosomal subunit protein bS16.